The following is a 468-amino-acid chain: Glutamate--tRNA ligase 2 (468 aa).

The 'HIGH' region signature appears at proline 11–glycine 21. The 'KMSKS' region motif lies at lysine 239–arginine 243. Lysine 242 contributes to the ATP binding site.

Belongs to the class-I aminoacyl-tRNA synthetase family. Glutamate--tRNA ligase type 1 subfamily. Monomer.

It localises to the cytoplasm. It catalyses the reaction tRNA(Glu) + L-glutamate + ATP = L-glutamyl-tRNA(Glu) + AMP + diphosphate. Catalyzes the attachment of glutamate to tRNA(Glu) in a two-step reaction: glutamate is first activated by ATP to form Glu-AMP and then transferred to the acceptor end of tRNA(Glu). The sequence is that of Glutamate--tRNA ligase 2 from Ruegeria pomeroyi (strain ATCC 700808 / DSM 15171 / DSS-3) (Silicibacter pomeroyi).